The sequence spans 320 residues: ATP-dependent 6-phosphofructokinase (320 aa).

ATP-binding positions include Gly-12, 73–74 (RF), and 103–106 (GDGS). Asp-104 lines the Mg(2+) pocket. Residue 126 to 128 (TID) participates in substrate binding. Asp-128 acts as the Proton acceptor in catalysis. Residue Arg-155 participates in ADP binding. Substrate is bound by residues Arg-163 and 170–172 (MGR). ADP contacts are provided by residues 186-188 (GCE) and Lys-212. Substrate is bound by residues Glu-223, Arg-244, and 250–253 (HIQR).

This sequence belongs to the phosphofructokinase type A (PFKA) family. ATP-dependent PFK group I subfamily. Prokaryotic clade 'B1' sub-subfamily. Homotetramer. Mg(2+) is required as a cofactor.

It localises to the cytoplasm. It carries out the reaction beta-D-fructose 6-phosphate + ATP = beta-D-fructose 1,6-bisphosphate + ADP + H(+). Its pathway is carbohydrate degradation; glycolysis; D-glyceraldehyde 3-phosphate and glycerone phosphate from D-glucose: step 3/4. Its activity is regulated as follows. Allosterically activated by ADP and other diphosphonucleosides, and allosterically inhibited by phosphoenolpyruvate. Catalyzes the phosphorylation of D-fructose 6-phosphate to fructose 1,6-bisphosphate by ATP, the first committing step of glycolysis. This chain is ATP-dependent 6-phosphofructokinase, found in Buchnera aphidicola subsp. Cinara cedri (strain Cc).